Consider the following 428-residue polypeptide: Glucose-1-phosphate adenylyltransferase (428 aa).

Residues Tyr-114, Gly-179, 194-195 (EK), and Ser-212 each bind alpha-D-glucose 1-phosphate.

The protein belongs to the bacterial/plant glucose-1-phosphate adenylyltransferase family. As to quaternary structure, homotetramer.

The enzyme catalyses alpha-D-glucose 1-phosphate + ATP + H(+) = ADP-alpha-D-glucose + diphosphate. The protein operates within glycan biosynthesis; glycogen biosynthesis. Its function is as follows. Involved in the biosynthesis of ADP-glucose, a building block required for the elongation reactions to produce glycogen. Catalyzes the reaction between ATP and alpha-D-glucose 1-phosphate (G1P) to produce pyrophosphate and ADP-Glc. The chain is Glucose-1-phosphate adenylyltransferase from Yersinia pseudotuberculosis serotype IB (strain PB1/+).